An 860-amino-acid chain; its full sequence is Putative mixed-linked glucan synthase 1 (860 aa).

2 helical membrane-spanning segments follow: residues 63–83 (ILHPYRFLILARLIAIVAFFA) and 93–113 (GAWLWTMSMVGDVWFGFSWVL). Asp183 is a catalytic residue. Residues 235–263 (ELMSDHRRVRREYEEFKVRIDSLSSTIRQ) adopt a coiled-coil conformation. Residues Asp381 and Asp383 each contribute to the substrate site. The active site involves Asp549. Transmembrane regions (helical) follow at residues 625 to 645 (TYPIVTVFIFFYNLFPVMWLI), 655 to 675 (FGEYLLYLVAVIAMIHVIGMF), 693 to 713 (FYMIGSTGVYPTAVLYMALKL), 747 to 767 (LLIPTIVIMVVNVAAVGVAVG), 781 to 801 (LAVLGMVFNVWILVLLYPFAL), and 812 to 832 (AVLFVAMAMAVAAVAAMYVAF).

Belongs to the glycosyltransferase 2 family. Plant cellulose synthase-like F subfamily.

Its subcellular location is the golgi apparatus membrane. In terms of biological role, may catalyze both beta-1,3 and beta-1,4 glycosidic linkage on beta-D-glucan. Essential for (1,3;1,4)-beta-D-glucans synthesis in grasses and cereals (Poaceae). The mixed-linked glucans (which are not present in walls of dicotyledons or most other monocotyledonous plants) are particularly important constituents of the walls of the starchy endosperm and aleurone cells of cereal grains such as oats, wheat, rice and barley. They can account for up to 70% by weight of the wall. The polypeptide is Putative mixed-linked glucan synthase 1 (CSFL1) (Oryza sativa subsp. japonica (Rice)).